Reading from the N-terminus, the 357-residue chain is UDP-N-acetylglucosamine--N-acetylmuramyl-(pentapeptide) pyrophosphoryl-undecaprenol N-acetylglucosamine transferase (357 aa).

UDP-N-acetyl-alpha-D-glucosamine contacts are provided by residues 13 to 15, Asn122, Arg163, Ser191, and Gln288; that span reads TGG.

The protein belongs to the glycosyltransferase 28 family. MurG subfamily.

It is found in the cell inner membrane. The catalysed reaction is di-trans,octa-cis-undecaprenyl diphospho-N-acetyl-alpha-D-muramoyl-L-alanyl-D-glutamyl-meso-2,6-diaminopimeloyl-D-alanyl-D-alanine + UDP-N-acetyl-alpha-D-glucosamine = di-trans,octa-cis-undecaprenyl diphospho-[N-acetyl-alpha-D-glucosaminyl-(1-&gt;4)]-N-acetyl-alpha-D-muramoyl-L-alanyl-D-glutamyl-meso-2,6-diaminopimeloyl-D-alanyl-D-alanine + UDP + H(+). It participates in cell wall biogenesis; peptidoglycan biosynthesis. Cell wall formation. Catalyzes the transfer of a GlcNAc subunit on undecaprenyl-pyrophosphoryl-MurNAc-pentapeptide (lipid intermediate I) to form undecaprenyl-pyrophosphoryl-MurNAc-(pentapeptide)GlcNAc (lipid intermediate II). This Gloeobacter violaceus (strain ATCC 29082 / PCC 7421) protein is UDP-N-acetylglucosamine--N-acetylmuramyl-(pentapeptide) pyrophosphoryl-undecaprenol N-acetylglucosamine transferase.